The chain runs to 777 residues: Androgen receptor (777 aa).

Residues 1-416 (MEVHIGLGGV…IDYYFPPQKP (416 aa)) are modulating. 3 disordered regions span residues 53-95 (CVHP…QAPQ), 110-132 (GEQGGMPEEGNSESASKEGYPES), and 205-241 (RRAGQSTYSAGKAPEDGSSLPTEDKEQPCTDMALSEP). NR C4-type zinc fingers lie at residues 417 to 434 (CLSCEDEASGCHYEALTC) and 453 to 472 (CASRNDCTIDKFRRKNCPSC). The segment at residues 417 to 489 (CLSCEDEASG…AGMTLGARKL (73 aa)) is a DNA-binding region (nuclear receptor). The NR LBD domain maps to 526-757 (SCQPIFLNVL…DFPEMMSEII (232 aa)). Residues Asn563, Arg610, and Thr735 each contribute to the 17beta-hydroxy-5alpha-androstan-3-one site.

The protein belongs to the nuclear hormone receptor family. NR3 subfamily. As to quaternary structure, binds DNA as a homodimer. Interacts via the ligand-binding domain with LXXLL and FXXLF motifs from coactivator proteins. Interacts (via ligand-binding domain) with TRIM68. In terms of tissue distribution, detected in somatic Leydig and Sertoli cells in testis with high level expression. Also detected at lower expression levels in forebrain and heart.

It is found in the nucleus. It localises to the cytoplasm. Functionally, steroid hormone receptors are ligand-activated transcription factors that regulate eukaryotic gene expression and affect cellular proliferation and differentiation in target tissues. Transcription factor activity is modulated by bound coactivator and corepressor proteins. This is Androgen receptor (ar) from Aquarana catesbeiana (American bullfrog).